The sequence spans 479 residues: ATP synthase subunit beta (479 aa).

153–160 contacts ATP; that stretch reads GGAGVGKT.

Belongs to the ATPase alpha/beta chains family. As to quaternary structure, F-type ATPases have 2 components, CF(1) - the catalytic core - and CF(0) - the membrane proton channel. CF(1) has five subunits: alpha(3), beta(3), gamma(1), delta(1), epsilon(1). CF(0) has three main subunits: a(1), b(2) and c(9-12). The alpha and beta chains form an alternating ring which encloses part of the gamma chain. CF(1) is attached to CF(0) by a central stalk formed by the gamma and epsilon chains, while a peripheral stalk is formed by the delta and b chains.

The protein localises to the cell membrane. It catalyses the reaction ATP + H2O + 4 H(+)(in) = ADP + phosphate + 5 H(+)(out). With respect to regulation, increases 2-fold following exposure to low pH. Functionally, produces ATP from ADP in the presence of a proton gradient across the membrane. The catalytic sites are hosted primarily by the beta subunits. The sequence is that of ATP synthase subunit beta from Lactobacillus acidophilus (strain ATCC 700396 / NCK56 / N2 / NCFM).